The following is a 463-amino-acid chain: Chaperone SurA (463 aa).

The first 25 residues, 1 to 25 (MTKPFSVVLASLLAITSTVSPLASA), serve as a signal peptide directing secretion. 2 consecutive PpiC domains span residues 174–276 (GSQY…KLVE) and 289–388 (VTEY…QRVG). 2 disordered regions span residues 328–348 (QATA…GDLG) and 432–463 (RTGD…KPTR). The span at 440–452 (NATAAPAKSADPA) shows a compositional bias: low complexity. Over residues 453–463 (APSPPPAKPTR) the composition is skewed to pro residues.

The protein localises to the periplasm. The catalysed reaction is [protein]-peptidylproline (omega=180) = [protein]-peptidylproline (omega=0). Chaperone involved in the correct folding and assembly of outer membrane proteins. Recognizes specific patterns of aromatic residues and the orientation of their side chains, which are found more frequently in integral outer membrane proteins. May act in both early periplasmic and late outer membrane-associated steps of protein maturation. This Xanthomonas euvesicatoria pv. vesicatoria (strain 85-10) (Xanthomonas campestris pv. vesicatoria) protein is Chaperone SurA.